Consider the following 507-residue polypeptide: Dolichyl pyrophosphate Man9GlcNAc2 alpha-1,3-glucosyltransferase (507 aa).

At 1–3 (MEK) the chain is on the cytoplasmic side. The chain crosses the membrane as a helical span at residues 4–24 (WYLMTVVVLIGLTVRWTVSLN). Topologically, residues 25–114 (SYSGAGKPPM…SQAHKLFMRT (90 aa)) are lumenal. Asparagine 59 carries an N-linked (GlcNAc...) asparagine glycan. A helical membrane pass occupies residues 115–135 (TVLIADLLIYIPAVVLYCCCL). Residues 136 to 143 (KEISTKKK) are Cytoplasmic-facing. Residues 144–164 (IANALCILLYPGLILIDYGHF) form a helical membrane-spanning segment. Topologically, residues 165–172 (QYNSVSLG) are lumenal. A helical membrane pass occupies residues 173–193 (FALWGVLGISCDCDLLGSLAF). Residues 194 to 226 (CLAINYKQMELYHALPFFCFLLGKCFKKGLKGK) lie on the Cytoplasmic side of the membrane. Residues 227-247 (GFVLLVKLACIVVASFVLCWL) form a helical membrane-spanning segment. Residues 248–297 (PFFTEREQTLQVLRRLFPVDRGLFEDKVANIWCSFNVFLKIKDILPRHIQ) are Lumenal-facing. Residues 298-318 (LIMSFCFTFLSLLPACIKLIL) form a helical membrane-spanning segment. Residues 319-323 (QPSSK) lie on the Cytoplasmic side of the membrane. Residues 324–344 (GFKFTLVSCALSFFLFSFQVH) traverse the membrane as a helical segment. The Lumenal segment spans residues 345–361 (EKSILLVSLPVCLVLSE). The chain crosses the membrane as a helical span at residues 362-382 (IPFMSTWFLLVSTFSMLPLLL). The Cytoplasmic portion of the chain corresponds to 383–387 (KDELL). A helical transmembrane segment spans residues 388-408 (MPSVVTTMAFFIACVTSFSIF). Topologically, residues 409 to 437 (EKTSEEELQLKSFSISVRKYLPCFTFLSR) are lumenal. A helical membrane pass occupies residues 438–458 (IIQYLFLISVITMVLLTLMTV). Topologically, residues 459 to 473 (TLGPPQKLPDLFSVL) are cytoplasmic. A helical transmembrane segment spans residues 474 to 494 (VCFVSCLNFLFFLVYFNIIIV). Topologically, residues 495–507 (WDSKSGRNQKKIS) are lumenal.

It belongs to the ALG6/ALG8 glucosyltransferase family.

The protein resides in the endoplasmic reticulum membrane. It carries out the reaction an alpha-D-Man-(1-&gt;2)-alpha-D-Man-(1-&gt;2)-alpha-D-Man-(1-&gt;3)-[alpha-D-Man-(1-&gt;2)-alpha-D-Man-(1-&gt;3)-[alpha-D-Man-(1-&gt;2)-alpha-D-Man-(1-&gt;6)]-alpha-D-Man-(1-&gt;6)]-beta-D-Man-(1-&gt;4)-beta-D-GlcNAc-(1-&gt;4)-alpha-D-GlcNAc-diphospho-di-trans,poly-cis-dolichol + a di-trans,poly-cis-dolichyl beta-D-glucosyl phosphate = an alpha-D-Glc-(1-&gt;3)-alpha-D-Man-(1-&gt;2)-alpha-D-Man-(1-&gt;2)-alpha-D-Man-(1-&gt;3)-[alpha-D-Man-(1-&gt;2)-alpha-D-Man-(1-&gt;3)-[alpha-D-Man-(1-&gt;2)-alpha-D-Man-(1-&gt;6)]-alpha-D-Man-(1-&gt;6)]-beta-D-Man-(1-&gt;4)-beta-D-GlcNAc-(1-&gt;4)-alpha-D-GlcNAc-diphospho-di-trans,poly-cis-dolichol + a di-trans,poly-cis-dolichyl phosphate + H(+). It functions in the pathway protein modification; protein glycosylation. In terms of biological role, dolichyl pyrophosphate Man9GlcNAc2 alpha-1,3-glucosyltransferase that operates in the biosynthetic pathway of dolichol-linked oligosaccharides, the glycan precursors employed in protein asparagine (N)-glycosylation. The assembly of dolichol-linked oligosaccharides begins on the cytosolic side of the endoplasmic reticulum membrane and finishes in its lumen. The sequential addition of sugars to dolichol pyrophosphate produces dolichol-linked oligosaccharides containing fourteen sugars, including two GlcNAcs, nine mannoses and three glucoses. Once assembled, the oligosaccharide is transferred from the lipid to nascent proteins by oligosaccharyltransferases. In the lumen of the endoplasmic reticulum, adds the first glucose residue from dolichyl phosphate glucose (Dol-P-Glc) onto the lipid-linked oligosaccharide intermediate Man(9)GlcNAc(2)-PP-Dol to produce Glc(1)Man(9)GlcNAc(2)-PP-Dol. Glc(1)Man(9)GlcNAc(2)-PP-Dol is a substrate for ALG8, the following enzyme in the biosynthetic pathway. This chain is Dolichyl pyrophosphate Man9GlcNAc2 alpha-1,3-glucosyltransferase, found in Pongo abelii (Sumatran orangutan).